Here is a 444-residue protein sequence, read N- to C-terminus: NAD(+)--protein-arginine ADP-ribosyltransferase Tre1 (444 aa).

The PAAR domain stretch occupies residues 72–140; that stretch reads PRHVTGVLAD…NDLLACSAEI (69 aa). Residues 266 to 444 enclose the TR mART core domain; sequence MTLAEAVGQE…TTHLLYREIP (179 aa). The interval 274–444 is ART domain; the sequence is QEQAKVWTQT…TTHLLYREIP (171 aa). Catalysis depends on residues Arg356, Ser381, and Glu415.

This sequence belongs to the Arg-specific ADP-ribosyltransferase family. Forms a stable complex with cognate immunity protein Tri1-Sp.

Its subcellular location is the secreted. It localises to the host cytoplasm. It catalyses the reaction L-arginyl-[protein] + NAD(+) = N(omega)-(ADP-D-ribosyl)-L-arginyl-[protein] + nicotinamide + H(+). Toxic component of a contact-dependent interbacterial competition system (also called effector-immunity systems). Acts by ADP-ribosylating a number of target proteins in target cells; E.coli target proteins include FtsZ, EFTu, RNase E, Fis, RL9, SucB, and LolD. FtsZ is thought to be the physiologically relevant target as it is ADP-ribosylated on a critical residue. ADP-ribosylation of FtsZ prevents formation of the FtsZ mid-cell ring and inhibits cell division. Overexpression of the whole Tre1 protein or the ART domain in E.coli is toxic; cells elongate dramatically and some undergo lysis. Toxic activity is neutralized by coexpression of the cognate immunity protein Tri1-Sp; Tri1-Sp neutralizes this protein both by binding to and occluding the active site (via Tri1's N-terminal extension) and by hydrolysis of the ADP-ribosyl moiety from the target protein. Tre1 can also be neutralized by non-cognate immunity protein Tri1-Pp from P.putida strain GB-1, with which it does not form a stable complex; DraG of R.palustris does not neutralize the toxic effects of this protein. In interbacterial competition studies Tri1 from P.putida strain B6-2 also neutralizes this protein. The sequence is that of NAD(+)--protein-arginine ADP-ribosyltransferase Tre1 from Serratia proteamaculans (strain 568).